A 200-amino-acid chain; its full sequence is Holliday junction resolvase RecU (200 aa).

The interval 1-24 (MTIRYPNGKRYDQASQPHKTPIKK) is disordered. Residues T85, D87, E100, and Q119 each coordinate Mg(2+).

It belongs to the RecU family. It depends on Mg(2+) as a cofactor.

The protein resides in the cytoplasm. The enzyme catalyses Endonucleolytic cleavage at a junction such as a reciprocal single-stranded crossover between two homologous DNA duplexes (Holliday junction).. In terms of biological role, endonuclease that resolves Holliday junction intermediates in genetic recombination. Cleaves mobile four-strand junctions by introducing symmetrical nicks in paired strands. Promotes annealing of linear ssDNA with homologous dsDNA. Required for DNA repair, homologous recombination and chromosome segregation. This Bacillus mycoides (strain KBAB4) (Bacillus weihenstephanensis) protein is Holliday junction resolvase RecU.